The primary structure comprises 420 residues: Amino acid decarboxylase lolD1 (420 aa).

Lys-62 is modified (N6-(pyridoxal phosphate)lysine). Pyridoxal 5'-phosphate contacts are provided by residues Ser-194, Gly-231, and 266-269 (EPGT). Position 315–316 (315–316 (IV)) interacts with substrate. Residue Cys-351 is the Proton donor; shared with dimeric partner of the active site. An S-nitrosocysteine modification is found at Cys-351. A substrate-binding site is contributed by Asp-352. Residue Tyr-381 participates in pyridoxal 5'-phosphate binding.

The protein belongs to the Orn/Lys/Arg decarboxylase class-II family. As to quaternary structure, homodimer. The cofactor is pyridoxal 5'-phosphate.

It functions in the pathway alkaloid biosynthesis. Its function is as follows. Amino acid decarboxylase; part of the gene cluster that mediates the biosynthesis of loline alkaloids, potent insecticidal agents composed of a pyrrolizidine ring system and an uncommon ether bridge linking carbons 2 and 7. Lolines are structurally differentiated by the various modifications of the L-amino group and include norloline, loline, N-methylloline, N-acetylloline, N-acetylnorloline, and N-formylloline. The first committed step is the condensation of O-acetyl-L-homoserine (derived from L-aspartic acid) and L-proline, probably catalyzed by the gamma-type pyridoxal 5'-phosphate(PLP)-dependent enzyme lolC, to give the diamino diacid, NACPP. Ensuing cyclization, decarboxylation, and acetylation steps yield 1-exo-acetamidopyrrolizidine (AcAP). LolO is required for installation of the ether bridge upon the pathway intermediate, 1-exo-acetamidopyrrolizidine (AcAP). In sequential 2-oxoglutarate- and O(2)-consuming steps, lolO removes hydrogens from C2 and C7 of AcAP to form both carbon-oxygen bonds in N-acetylnorloline (NANL), the precursor to all other lolines. The enzymes lolD, lolE, lolF and lolT have also been proposed to be involved in the ether-bridge installation. Further processing of the exocyclic moiety of NANL by fungal N-acetamidase (LolN), methyltransferase (LolM), and cytochrome P450 (LolP) enzymes, with occasional involvement of a plant acetyltransferase, generates the other known lolines. LolN transforms NANL to norlonine which is monomethylated and dimethylated to respectively lonine and N-methyllonine (NML) by lolM. LolP catalyzes hydroxylation of the methyl group in N-methylloline (NML) and further oxygenation to N-formylloline (NFL). A plant acetyltransferase is responsible for the acetylation of loline to form N-acetylloline (NAL). LolA might interact with aspartate kinase to prevent feedback inhibition of its activity by these end products and thereby promote production of L-homoserine from L-aspartate. This chain is Amino acid decarboxylase lolD1, found in Epichloe uncinata (Endophyte fungus).